Here is a 209-residue protein sequence, read N- to C-terminus: Octanoyltransferase (209 aa).

Residues 30–209 enclose the BPL/LPL catalytic domain; it reads DHEPEIIYLV…IQTEFNKIFK (180 aa). Substrate is bound by residues 69-76, 143-145, and 156-158; these read RGGKFTFH, AIG, and GVA. Residue Cys-174 is the Acyl-thioester intermediate of the active site.

Belongs to the LipB family.

The protein resides in the cytoplasm. It catalyses the reaction octanoyl-[ACP] + L-lysyl-[protein] = N(6)-octanoyl-L-lysyl-[protein] + holo-[ACP] + H(+). It participates in protein modification; protein lipoylation via endogenous pathway; protein N(6)-(lipoyl)lysine from octanoyl-[acyl-carrier-protein]: step 1/2. Functionally, catalyzes the transfer of endogenously produced octanoic acid from octanoyl-acyl-carrier-protein onto the lipoyl domains of lipoate-dependent enzymes. Lipoyl-ACP can also act as a substrate although octanoyl-ACP is likely to be the physiological substrate. In Rickettsia rickettsii (strain Iowa), this protein is Octanoyltransferase.